A 464-amino-acid polypeptide reads, in one-letter code: Leucine-rich repeat-containing protein 34 (464 aa).

Positions 1-48 (MAAQPPRPVGERSMGSSREAARAPARSPAWASTQASTPGAALAVQRES) are disordered. Residues 16-32 (SSREAARAPARSPAWAS) are compositionally biased toward low complexity. LRR repeat units follow at residues 295–315 (SLRY…VYLA) and 323–345 (TLEV…LSET).

In terms of assembly, interacts with NPM1 and NCL.

Its subcellular location is the nucleus. It localises to the nucleolus. The protein resides in the cytoplasm. In terms of biological role, highly expressed in stem cells where it may be involved in regulation of pluripotency. In embryonic stem cells (ESCs), important for normal expression of the pluripotency regulators POU5F1/OCT4 and KLF4. Also important for expression of the ectodermal marker gene NES and the endodermal marker gene GATA4. Promotes stem cell proliferation in vitro. In Homo sapiens (Human), this protein is Leucine-rich repeat-containing protein 34 (LRRC34).